A 197-amino-acid chain; its full sequence is Imidazoleglycerol-phosphate dehydratase (197 aa).

It belongs to the imidazoleglycerol-phosphate dehydratase family.

The protein resides in the cytoplasm. It carries out the reaction D-erythro-1-(imidazol-4-yl)glycerol 3-phosphate = 3-(imidazol-4-yl)-2-oxopropyl phosphate + H2O. It functions in the pathway amino-acid biosynthesis; L-histidine biosynthesis; L-histidine from 5-phospho-alpha-D-ribose 1-diphosphate: step 6/9. The chain is Imidazoleglycerol-phosphate dehydratase from Alkalilimnicola ehrlichii (strain ATCC BAA-1101 / DSM 17681 / MLHE-1).